The sequence spans 297 residues: Phosphatidylglycerol--prolipoprotein diacylglyceryl transferase (297 aa).

The next 3 membrane-spanning stretches (helical) occupy residues 17–37 (LAVR…IVVG), 59–79 (MLFY…VLFY), and 97–117 (GGMS…LFAW). Residue R142 coordinates a 1,2-diacyl-sn-glycero-3-phospho-(1'-sn-glycerol). 2 helical membrane-spanning segments follow: residues 230-250 (MGAV…TVEF) and 257-277 (FLGL…PMIV).

This sequence belongs to the Lgt family.

The protein localises to the cell inner membrane. It catalyses the reaction L-cysteinyl-[prolipoprotein] + a 1,2-diacyl-sn-glycero-3-phospho-(1'-sn-glycerol) = an S-1,2-diacyl-sn-glyceryl-L-cysteinyl-[prolipoprotein] + sn-glycerol 1-phosphate + H(+). The protein operates within protein modification; lipoprotein biosynthesis (diacylglyceryl transfer). In terms of biological role, catalyzes the transfer of the diacylglyceryl group from phosphatidylglycerol to the sulfhydryl group of the N-terminal cysteine of a prolipoprotein, the first step in the formation of mature lipoproteins. This Burkholderia multivorans (strain ATCC 17616 / 249) protein is Phosphatidylglycerol--prolipoprotein diacylglyceryl transferase.